Consider the following 185-residue polypeptide: Threonylcarbamoyl-AMP synthase (185 aa).

Positions 5–185 constitute a YrdC-like domain; sequence ADRIADAVAA…DLQSGETLRR (181 aa).

This sequence belongs to the SUA5 family. TsaC subfamily.

It localises to the cytoplasm. The catalysed reaction is L-threonine + hydrogencarbonate + ATP = L-threonylcarbamoyladenylate + diphosphate + H2O. In terms of biological role, required for the formation of a threonylcarbamoyl group on adenosine at position 37 (t(6)A37) in tRNAs that read codons beginning with adenine. Catalyzes the conversion of L-threonine, HCO(3)(-)/CO(2) and ATP to give threonylcarbamoyl-AMP (TC-AMP) as the acyladenylate intermediate, with the release of diphosphate. The chain is Threonylcarbamoyl-AMP synthase from Chromohalobacter salexigens (strain ATCC BAA-138 / DSM 3043 / CIP 106854 / NCIMB 13768 / 1H11).